The chain runs to 195 residues: GTP-dependent dephospho-CoA kinase (195 aa).

Residues Asp49, Val50, Asp68, Glu127, and Asp150 each contribute to the GTP site.

The protein belongs to the GTP-dependent DPCK family.

The enzyme catalyses 3'-dephospho-CoA + GTP = GDP + CoA + H(+). Its pathway is cofactor biosynthesis; coenzyme A biosynthesis. Functionally, catalyzes the GTP-dependent phosphorylation of the 3'-hydroxyl group of dephosphocoenzyme A to form coenzyme A (CoA). The sequence is that of GTP-dependent dephospho-CoA kinase from Methanosarcina barkeri (strain Fusaro / DSM 804).